We begin with the raw amino-acid sequence, 611 residues long: Chaperone protein HscA (611 aa).

The protein belongs to the heat shock protein 70 family.

In terms of biological role, chaperone involved in the maturation of iron-sulfur cluster-containing proteins. Has a low intrinsic ATPase activity which is markedly stimulated by HscB. Involved in the maturation of IscU. In Buchnera aphidicola subsp. Acyrthosiphon pisum (strain 5A), this protein is Chaperone protein HscA.